We begin with the raw amino-acid sequence, 432 residues long: Dihydroorotase (432 aa).

Zn(2+)-binding residues include His-60 and His-62. Substrate contacts are provided by residues 62–64 and Asn-94; that span reads HLR. The Zn(2+) site is built by Asp-152, His-179, and His-232. Residue Asn-278 participates in substrate binding. Asp-305 is a binding site for Zn(2+). The active site involves Asp-305. Substrate-binding positions include His-309 and 323 to 324; that span reads FG.

Belongs to the metallo-dependent hydrolases superfamily. DHOase family. Class I DHOase subfamily. Requires Zn(2+) as cofactor.

It catalyses the reaction (S)-dihydroorotate + H2O = N-carbamoyl-L-aspartate + H(+). It functions in the pathway pyrimidine metabolism; UMP biosynthesis via de novo pathway; (S)-dihydroorotate from bicarbonate: step 3/3. Its function is as follows. Catalyzes the reversible cyclization of carbamoyl aspartate to dihydroorotate. The polypeptide is Dihydroorotase (Elusimicrobium minutum (strain Pei191)).